Here is a 638-residue protein sequence, read N- to C-terminus: Threonine--tRNA ligase (638 aa).

One can recognise a TGS domain in the interval 1-61 (MPEITLPDGS…DNDSKVVIIT (61 aa)). Positions 242 to 533 (DHRKLGKKHS…LIEQYEAKFP (292 aa)) are catalytic. Positions 333, 384, and 510 each coordinate Zn(2+).

This sequence belongs to the class-II aminoacyl-tRNA synthetase family. As to quaternary structure, homodimer. Zn(2+) is required as a cofactor.

Its subcellular location is the cytoplasm. The enzyme catalyses tRNA(Thr) + L-threonine + ATP = L-threonyl-tRNA(Thr) + AMP + diphosphate + H(+). Functionally, catalyzes the attachment of threonine to tRNA(Thr) in a two-step reaction: L-threonine is first activated by ATP to form Thr-AMP and then transferred to the acceptor end of tRNA(Thr). Also edits incorrectly charged L-seryl-tRNA(Thr). The sequence is that of Threonine--tRNA ligase from Prochlorococcus marinus subsp. pastoris (strain CCMP1986 / NIES-2087 / MED4).